Reading from the N-terminus, the 349-residue chain is Very-long-chain 3-oxoacyl-CoA reductase (349 aa).

Residues 19–39 traverse the membrane as a helical segment; it reads AIIFALLLGVFKLTVFSLKFA. NADP(+)-binding residues include Val-65, Asp-119, Asn-146, Tyr-221, Lys-225, Val-254, and Ser-256. Residue Tyr-221 is the Proton donor of the active site. Lys-225 functions as the Lowers pKa of active site Tyr in the catalytic mechanism.

The protein belongs to the short-chain dehydrogenases/reductases (SDR) family.

The protein resides in the endoplasmic reticulum membrane. The enzyme catalyses a very-long-chain (3R)-3-hydroxyacyl-CoA + NADP(+) = a very-long-chain 3-oxoacyl-CoA + NADPH + H(+). It participates in lipid metabolism; fatty acid biosynthesis. In terms of biological role, component of the microsomal membrane bound fatty acid elongation system, which produces the 26-carbon very long-chain fatty acids (VLCFA) from palmitate. Catalyzes the reduction of the 3-ketoacyl-CoA intermediate that is formed in each cycle of fatty acid elongation. VLCFAs serve as precursors for ceramide and sphingolipids. The chain is Very-long-chain 3-oxoacyl-CoA reductase from Candida albicans (strain SC5314 / ATCC MYA-2876) (Yeast).